Reading from the N-terminus, the 149-residue chain is Pleckstrin homology domain-containing family J member 1 (149 aa).

The PH domain occupies 15-108 (RAEKAAELGM…WVEALTNASY (94 aa)).

The polypeptide is Pleckstrin homology domain-containing family J member 1 (plekhj1) (Xenopus laevis (African clawed frog)).